The chain runs to 238 residues: Uridylate kinase (238 aa).

12 to 15 provides a ligand contact to ATP; sequence KLSG. Glycine 54 serves as a coordination point for UMP. Residues glycine 55 and arginine 59 each contribute to the ATP site. Residues aspartate 74 and 135 to 142 contribute to the UMP site; that span reads TGNPYFTT. ATP is bound by residues threonine 162, asparagine 163, tyrosine 168, and aspartate 171.

The protein belongs to the UMP kinase family. In terms of assembly, homohexamer.

The protein localises to the cytoplasm. It carries out the reaction UMP + ATP = UDP + ADP. The protein operates within pyrimidine metabolism; CTP biosynthesis via de novo pathway; UDP from UMP (UMPK route): step 1/1. Inhibited by UTP. Its function is as follows. Catalyzes the reversible phosphorylation of UMP to UDP. The chain is Uridylate kinase from Rhodopseudomonas palustris (strain ATCC BAA-98 / CGA009).